The sequence spans 311 residues: Porphobilinogen deaminase (311 aa).

The residue at position 241 (Cys241) is an S-(dipyrrolylmethanemethyl)cysteine.

This sequence belongs to the HMBS family. In terms of assembly, monomer. Dipyrromethane is required as a cofactor.

It carries out the reaction 4 porphobilinogen + H2O = hydroxymethylbilane + 4 NH4(+). Its pathway is porphyrin-containing compound metabolism; protoporphyrin-IX biosynthesis; coproporphyrinogen-III from 5-aminolevulinate: step 2/4. Functionally, tetrapolymerization of the monopyrrole PBG into the hydroxymethylbilane pre-uroporphyrinogen in several discrete steps. The chain is Porphobilinogen deaminase from Campylobacter curvus (strain 525.92).